A 1320-amino-acid polypeptide reads, in one-letter code: Immunoglobulin superfamily member 1 (1320 aa).

An N-terminal signal peptide occupies residues 1 to 18; that stretch reads MMLRTFTLLLLCIWLNRG. The Extracellular segment spans residues 19 to 504; it reads MTSMAAVESQ…LPWNSILNEA (486 aa). 5 consecutive Ig-like C2-type domains span residues 29 to 113, 115 to 212, 224 to 308, 312 to 399, and 401 to 482; these read PELW…KILE, EAPG…KLVV, HPGP…IWVT, PKTW…ATYN, and VELI…HRSE. Asn44 carries N-linked (GlcNAc...) asparagine glycosylation. Cys49 and Cys97 are joined by a disulfide. Asn329, Asn365, and Asn372 each carry an N-linked (GlcNAc...) asparagine glycan. 2 disulfide bridges follow: Cys334–Cys383 and Cys423–Cys466. Residues 505-525 traverse the membrane as a helical segment; sequence IRVSLTVQFLSLLLLVLWLQW. The Cytoplasmic segment spans residues 526-534; that stretch reads KCRRLRLRE. A helical transmembrane segment spans residues 535 to 555; the sequence is AWLLGTAQGVAMLVILIALLC. Topologically, residues 556-1320 are extracellular; the sequence is CGLCNGALTE…GVSVEQTVPI (765 aa). Ig-like C2-type domains follow at residues 572-665, 662-756, 761-853, 857-942, 949-1044, 1049-1134, and 1145-1226; these read PTPK…VGTD, VGTD…ELVI, PKPF…LIVT, PKPT…YLST, TDTF…ELIV, PKPS…NHSN, and PKPS…EPSD. N-linked (GlcNAc...) asparagine glycans are attached at residues Asn591, Asn731, Asn782, Asn830, Asn874, Asn923, Asn970, Asn1011, and Asn1066. Cys783 and Cys833 are disulfide-bonded. Cys879 and Cys926 form a disulfide bridge. Cysteines 1071 and 1118 form a disulfide. Asn1131 and Asn1207 each carry an N-linked (GlcNAc...) asparagine glycan. A disulfide bridge connects residues Cys1167 and Cys1210.

In terms of assembly, interacts with INHA; the interaction is not confirmed by standard receptor binding assays. Interacts with ACVR1B; the interaction appears to be ligand-dependent as it is diminished by inhibin B and activin A. Interacts with ACVR2A, ACVR2B, ACVRL1 and BMPR1B. Interacts with HECTD1. In terms of tissue distribution, expressed in pituitary gland, testis and liver. Isoform 2 is expressed pituitary gland and testis.

It localises to the membrane. It is found in the secreted. In terms of biological role, seems to be a coreceptor in inhibin signaling, but seems not to be a high-affinity inhibin receptor. Antagonizes activin A signaling in the presence or absence of inhibin B. Necessary to mediate a specific antagonistic effect of inhibin B on activin-stimulated transcription. The sequence is that of Immunoglobulin superfamily member 1 (Igsf1) from Rattus norvegicus (Rat).